Here is a 277-residue protein sequence, read N- to C-terminus: MEMO1 family protein CTN_0605 (277 aa).

Belongs to the MEMO1 family.

The sequence is that of MEMO1 family protein CTN_0605 from Thermotoga neapolitana (strain ATCC 49049 / DSM 4359 / NBRC 107923 / NS-E).